A 428-amino-acid chain; its full sequence is Metal tolerance protein 10 (428 aa).

The Cytoplasmic segment spans residues Met1–Arg140. Residues Leu141–Ser161 traverse the membrane as a helical segment. Residues Met162–Met167 are Vacuolar-facing. A helical membrane pass occupies residues Ala168 to Phe188. Topologically, residues Thr189–Gln209 are cytoplasmic. The chain crosses the membrane as a helical span at residues Pro210 to Glu230. The Vacuolar portion of the chain corresponds to Ser231–Glu248. Residues Lys249–Cys269 traverse the membrane as a helical segment. At Arg270–Asp287 the chain is on the cytoplasmic side. The helical transmembrane segment at Val288–Ile308 threads the bilayer. At Asp309–Thr311 the chain is on the vacuolar side. Residues Gly312–Val332 traverse the membrane as a helical segment. The Cytoplasmic segment spans residues His333 to Asn428.

It belongs to the cation diffusion facilitator (CDF) transporter (TC 2.A.4) family. SLC30A subfamily.

It localises to the vacuole membrane. Involved in sequestration of excess metal in the cytoplasm into vacuoles to maintain metal homeostasis. This Arabidopsis thaliana (Mouse-ear cress) protein is Metal tolerance protein 10 (MTP10).